A 388-amino-acid chain; its full sequence is Mannitol-1-phosphate 5-dehydrogenase (388 aa).

Residue 4–15 coordinates NAD(+); it reads AVHFGAGNIGRG.

It belongs to the mannitol dehydrogenase family.

The catalysed reaction is D-mannitol 1-phosphate + NAD(+) = beta-D-fructose 6-phosphate + NADH + H(+). The sequence is that of Mannitol-1-phosphate 5-dehydrogenase from Lactococcus lactis subsp. cremoris (strain MG1363).